We begin with the raw amino-acid sequence, 156 residues long: Small ribosomal subunit protein uS7 (156 aa).

The protein belongs to the universal ribosomal protein uS7 family. In terms of assembly, part of the 30S ribosomal subunit. Contacts proteins S9 and S11.

Functionally, one of the primary rRNA binding proteins, it binds directly to 16S rRNA where it nucleates assembly of the head domain of the 30S subunit. Is located at the subunit interface close to the decoding center, probably blocks exit of the E-site tRNA. In Deinococcus deserti (strain DSM 17065 / CIP 109153 / LMG 22923 / VCD115), this protein is Small ribosomal subunit protein uS7.